Here is a 336-residue protein sequence, read N- to C-terminus: Holliday junction branch migration complex subunit RuvB (336 aa).

A large ATPase domain (RuvB-L) region spans residues 4–184 (ADRLISAGTT…FGIVQRLEFY (181 aa)). Residues isoleucine 23, arginine 24, glycine 65, lysine 68, threonine 69, threonine 70, 131-133 (EDY), arginine 174, tyrosine 184, and arginine 221 contribute to the ATP site. Threonine 69 is a binding site for Mg(2+). The interval 185–255 (QVPDLQYIVS…IAAQALDMLN (71 aa)) is small ATPAse domain (RuvB-S). Positions 258–336 (AEGFDYMDRK…HFGITPPEMP (79 aa)) are head domain (RuvB-H). DNA contacts are provided by arginine 294, arginine 313, and arginine 318.

This sequence belongs to the RuvB family. Homohexamer. Forms an RuvA(8)-RuvB(12)-Holliday junction (HJ) complex. HJ DNA is sandwiched between 2 RuvA tetramers; dsDNA enters through RuvA and exits via RuvB. An RuvB hexamer assembles on each DNA strand where it exits the tetramer. Each RuvB hexamer is contacted by two RuvA subunits (via domain III) on 2 adjacent RuvB subunits; this complex drives branch migration. In the full resolvosome a probable DNA-RuvA(4)-RuvB(12)-RuvC(2) complex forms which resolves the HJ.

It localises to the cytoplasm. The enzyme catalyses ATP + H2O = ADP + phosphate + H(+). Functionally, the RuvA-RuvB-RuvC complex processes Holliday junction (HJ) DNA during genetic recombination and DNA repair, while the RuvA-RuvB complex plays an important role in the rescue of blocked DNA replication forks via replication fork reversal (RFR). RuvA specifically binds to HJ cruciform DNA, conferring on it an open structure. The RuvB hexamer acts as an ATP-dependent pump, pulling dsDNA into and through the RuvAB complex. RuvB forms 2 homohexamers on either side of HJ DNA bound by 1 or 2 RuvA tetramers; 4 subunits per hexamer contact DNA at a time. Coordinated motions by a converter formed by DNA-disengaged RuvB subunits stimulates ATP hydrolysis and nucleotide exchange. Immobilization of the converter enables RuvB to convert the ATP-contained energy into a lever motion, pulling 2 nucleotides of DNA out of the RuvA tetramer per ATP hydrolyzed, thus driving DNA branch migration. The RuvB motors rotate together with the DNA substrate, which together with the progressing nucleotide cycle form the mechanistic basis for DNA recombination by continuous HJ branch migration. Branch migration allows RuvC to scan DNA until it finds its consensus sequence, where it cleaves and resolves cruciform DNA. This Shigella flexneri serotype 5b (strain 8401) protein is Holliday junction branch migration complex subunit RuvB.